Here is a 332-residue protein sequence, read N- to C-terminus: MSPTSDFVNTTSTAKGHEIIAGLTAKPVEGSTITLCKDIIREFFDKVQVPSPNFTRDPELEARVADIVRTWGNEEHLRPYVVTSLILTVTAYSHIANFETRVQITLFTIIIIAMDDPVVFDSLATREFHQRMCTGVIQDEAGMLGAFTKILESMWDHYSGFSANTIYASALRFVNASIIENETDVTTLRSHALPFVEYKRSMTATTEAYACFIWDKARFPDVKVYMQAIPDAMLYVSYVNDILSFYKEELAGETANYIHERAYVTGKSIPDTLRNLINETASAVERVRDILGEGEARAAFENFAAGYIRVHTGNPRYHLKDVIGGDYIIDRV.

Residues Asp-115, Glu-180, Asn-240, Ser-244, and Glu-248 each contribute to the Mg(2+) site. Residues 115-121 (DDPVVFD) carry the DDXXXXD motif motif. The NSE/DTE motif signature appears at 240-248 (NDILSFYKE).

This sequence belongs to the trichodiene synthase family. Requires Mg(2+) as cofactor.

Functionally, terpene cyclase that catalyzes the cyclization of geranyl diphosphate (GPP) to myrcene and linalool. The sequence is that of Monoterpene synthase 25 from Postia placenta (strain ATCC 44394 / Madison 698-R) (Brown rot fungus).